The primary structure comprises 227 residues: Flagellar L-ring protein (227 aa).

Residues 1-16 form the signal peptide; that stretch reads MRNIILFAAGTLLLSG. A lipid anchor (N-palmitoyl cysteine) is attached at cysteine 17. Cysteine 17 carries S-diacylglycerol cysteine lipidation.

The protein belongs to the FlgH family. The basal body constitutes a major portion of the flagellar organelle and consists of four rings (L,P,S, and M) mounted on a central rod.

It localises to the cell outer membrane. Its subcellular location is the bacterial flagellum basal body. Functionally, assembles around the rod to form the L-ring and probably protects the motor/basal body from shearing forces during rotation. This Pseudoalteromonas translucida (strain TAC 125) protein is Flagellar L-ring protein.